We begin with the raw amino-acid sequence, 253 residues long: Phosphoribosylaminoimidazole-succinocarboxamide synthase (253 aa).

Belongs to the SAICAR synthetase family.

It catalyses the reaction 5-amino-1-(5-phospho-D-ribosyl)imidazole-4-carboxylate + L-aspartate + ATP = (2S)-2-[5-amino-1-(5-phospho-beta-D-ribosyl)imidazole-4-carboxamido]succinate + ADP + phosphate + 2 H(+). The protein operates within purine metabolism; IMP biosynthesis via de novo pathway; 5-amino-1-(5-phospho-D-ribosyl)imidazole-4-carboxamide from 5-amino-1-(5-phospho-D-ribosyl)imidazole-4-carboxylate: step 1/2. The chain is Phosphoribosylaminoimidazole-succinocarboxamide synthase from Parvibaculum lavamentivorans (strain DS-1 / DSM 13023 / NCIMB 13966).